The primary structure comprises 558 residues: 2-isopropylmalate synthase (558 aa).

Positions 31–305 (PRWCSTDLRD…YPNLDFSDMR (275 aa)) constitute a Pyruvate carboxyltransferase domain. Mg(2+) contacts are provided by Asp40, His244, His246, and Asn280. The tract at residues 439–558 (NPDDKGQMKL…NACHPLYKEA (120 aa)) is regulatory domain.

This sequence belongs to the alpha-IPM synthase/homocitrate synthase family. LeuA type 2 subfamily. As to quaternary structure, homodimer. Mg(2+) serves as cofactor.

It is found in the cytoplasm. It catalyses the reaction 3-methyl-2-oxobutanoate + acetyl-CoA + H2O = (2S)-2-isopropylmalate + CoA + H(+). It functions in the pathway amino-acid biosynthesis; L-leucine biosynthesis; L-leucine from 3-methyl-2-oxobutanoate: step 1/4. Catalyzes the condensation of the acetyl group of acetyl-CoA with 3-methyl-2-oxobutanoate (2-ketoisovalerate) to form 3-carboxy-3-hydroxy-4-methylpentanoate (2-isopropylmalate). The polypeptide is 2-isopropylmalate synthase (Marinomonas sp. (strain MWYL1)).